The chain runs to 123 residues: Small ribosomal subunit protein uS13 (123 aa).

The disordered stretch occupies residues 92–123 (RKGLPVRGQKTKTNARTRKGPKKLVGAKKKSK).

It belongs to the universal ribosomal protein uS13 family. As to quaternary structure, part of the 30S ribosomal subunit. Forms a loose heterodimer with protein S19. Forms two bridges to the 50S subunit in the 70S ribosome.

Its function is as follows. Located at the top of the head of the 30S subunit, it contacts several helices of the 16S rRNA. In the 70S ribosome it contacts the 23S rRNA (bridge B1a) and protein L5 of the 50S subunit (bridge B1b), connecting the 2 subunits; these bridges are implicated in subunit movement. Contacts the tRNAs in the A and P-sites. This chain is Small ribosomal subunit protein uS13, found in Clostridium kluyveri (strain NBRC 12016).